Here is a 93-residue protein sequence, read N- to C-terminus: Small ribosomal subunit protein uS19 (93 aa).

It belongs to the universal ribosomal protein uS19 family.

Functionally, protein S19 forms a complex with S13 that binds strongly to the 16S ribosomal RNA. In Nitratidesulfovibrio vulgaris (strain DSM 19637 / Miyazaki F) (Desulfovibrio vulgaris), this protein is Small ribosomal subunit protein uS19.